The following is a 225-amino-acid chain: Probable manganese catalase (225 aa).

Glutamate 37 is a binding site for Mn(2+). 2 residues coordinate Ca(2+): aspartate 58 and aspartate 62. Residues glutamate 67, histidine 70, glutamate 138, and histidine 171 each contribute to the Mn(2+) site. Serine 204 contacts Ca(2+). The disordered stretch occupies residues 204–225 (STPGRYVQDPNPTEPSFSNPRR). Positions 213–225 (PNPTEPSFSNPRR) are enriched in polar residues.

Belongs to the manganese catalase family. Ca(2+) is required as a cofactor. Mn(2+) serves as cofactor.

The enzyme catalyses 2 H2O2 = O2 + 2 H2O. Functionally, catalyzes the decomposition of hydrogen peroxide into water and oxygen. The chain is Probable manganese catalase from Clostridium acetobutylicum (strain ATCC 824 / DSM 792 / JCM 1419 / IAM 19013 / LMG 5710 / NBRC 13948 / NRRL B-527 / VKM B-1787 / 2291 / W).